Reading from the N-terminus, the 692-residue chain is Proprotein convertase subtilisin/kexin type 9 (692 aa).

Residues 1–30 form the signal peptide; it reads MGTVSSRRSWWPLPLPLLLLLLLGPAGARA. The propeptide occupies 31–152; that stretch reads QEDEDGDYEE…IEEDSSVFAQ (122 aa). Tyr38 carries the sulfotyrosine modification. At Ser47 the chain carries Phosphoserine. In terms of domain architecture, Inhibitor I9 spans 77–149; the sequence is TYVVVLKEET…VDYIEEDSSV (73 aa). The 290-residue stretch at 155-444 folds into the Peptidase S8 domain; sequence PWNLERITPA…VLTPNLVAAL (290 aa). Active-site charge relay system residues include Asp186 and His226. 2 disulfides stabilise this stretch: Cys223–Cys255 and Cys323–Cys358. Ser386 (charge relay system) is an active-site residue. A C-terminal domain region spans residues 450-692; sequence RAGWQLFCRT…HLVQASQELQ (243 aa). Cystine bridges form between Cys457-Cys527, Cys477-Cys526, and Cys486-Cys509. The N-linked (GlcNAc...) asparagine glycan is linked to Asn533. 6 disulfides stabilise this stretch: Cys534–Cys601, Cys552–Cys600, Cys562–Cys588, Cys608–Cys679, Cys626–Cys678, and Cys635–Cys654. Ser688 carries the phosphoserine modification.

Belongs to the peptidase S8 family. Monomer. Can self-associate to form dimers and higher multimers which may have increased LDLR degrading activity. The precursor protein but not the mature protein may form multimers. Interacts with APOB, VLDLR, LRP8/APOER2 and BACE1. The full-length immature form (pro-PCSK9) interacts with SCNN1A, SCNN1B and SCNN1G. The pro-PCSK9 form (via C-terminal domain) interacts with LDLR. Interacts (via the C-terminal domain) with ANXA2 (via repeat Annexin 1); the interaction inhibits the degradation of LDLR. Requires Ca(2+) as cofactor. Post-translationally, cleavage by furin and PCSK5 generates a truncated inactive protein that is unable to induce LDLR degradation. Undergoes autocatalytic cleavage in the endoplasmic reticulum to release the propeptide from the N-terminus and the cleavage of the propeptide is strictly required for its maturation and activation. The cleaved propeptide however remains associated with the catalytic domain through non-covalent interactions, preventing potential substrates from accessing its active site. As a result, it is secreted from cells as a propeptide-containing, enzymatically inactive protein. In terms of processing, phosphorylation protects the propeptide against proteolysis.

The protein resides in the cytoplasm. It localises to the secreted. The protein localises to the endosome. It is found in the lysosome. Its subcellular location is the cell surface. The protein resides in the endoplasmic reticulum. It localises to the golgi apparatus. With respect to regulation, its proteolytic activity is autoinhibited by the non-covalent binding of the propeptide to the catalytic domain. Inhibited by EGTA. Crucial player in the regulation of plasma cholesterol homeostasis. Binds to low-density lipid receptor family members: low density lipoprotein receptor (LDLR), very low density lipoprotein receptor (VLDLR), apolipoprotein E receptor (LRP1/APOER) and apolipoprotein receptor 2 (LRP8/APOER2), and promotes their degradation in intracellular acidic compartments. Acts via a non-proteolytic mechanism to enhance the degradation of the hepatic LDLR through a clathrin LDLRAP1/ARH-mediated pathway. May prevent the recycling of LDLR from endosomes to the cell surface or direct it to lysosomes for degradation. Can induce ubiquitination of LDLR leading to its subsequent degradation. Inhibits intracellular degradation of APOB via the autophagosome/lysosome pathway in a LDLR-independent manner. Involved in the disposal of non-acetylated intermediates of BACE1 in the early secretory pathway. Inhibits epithelial Na(+) channel (ENaC)-mediated Na(+) absorption by reducing ENaC surface expression primarily by increasing its proteasomal degradation. Regulates neuronal apoptosis via modulation of LRP8/APOER2 levels and related anti-apoptotic signaling pathways. The chain is Proprotein convertase subtilisin/kexin type 9 (PCSK9) from Macaca nemestrina (Pig-tailed macaque).